The chain runs to 695 residues: NADPH--cytochrome P450 reductase (695 aa).

Topologically, residues 1–8 (MAQLDTLD) are lumenal. Residues 9-31 (LVVLVALLVGSVAYFTKGTYWAV) form a helical membrane-spanning segment. Over 32 to 695 (AKDPYASSGP…SGSYQEDVWS (664 aa)) the chain is Cytoplasmic. The Flavodoxin-like domain occupies 66–221 (CVIFYGSQTG…DFLAWKEPMW (156 aa)). Residues 72 to 77 (SQTGTA), 123 to 126 (ATYG), 169 to 178 (LGNNTYEHYN), and Asp204 each bind FMN. The FAD-binding FR-type domain occupies 277-538 (HNPFIAPIVE…HVRHSNFKLP (262 aa)). Arg296 is a binding site for NADP(+). FAD contacts are provided by residues 451 to 454 (RYYS), 469 to 471 (TAV), and 486 to 489 (GVTT). Residues Thr552, 614–615 (SR), 620–624 (KVYVQ), and Glu656 each bind NADP(+). Residue Trp694 participates in FAD binding.

The protein belongs to the NADPH--cytochrome P450 reductase family. In the N-terminal section; belongs to the flavodoxin family. It in the C-terminal section; belongs to the flavoprotein pyridine nucleotide cytochrome reductase family. It depends on FAD as a cofactor. Requires FMN as cofactor.

It localises to the endoplasmic reticulum membrane. Its subcellular location is the mitochondrion outer membrane. It is found in the cell membrane. It carries out the reaction 2 oxidized [cytochrome P450] + NADPH = 2 reduced [cytochrome P450] + NADP(+) + H(+). In terms of biological role, this enzyme is required for electron transfer from NADP to cytochrome P450 in microsomes. It can also provide electron transfer to heme oxygenase and cytochrome B5. Involved in ergosterol biosynthesis. The sequence is that of NADPH--cytochrome P450 reductase from Aspergillus oryzae (strain ATCC 42149 / RIB 40) (Yellow koji mold).